The primary structure comprises 389 residues: Very-long-chain 3-oxoacyl-CoA reductase (389 aa).

The helical transmembrane segment at isoleucine 34–valine 54 threads the bilayer. NADP(+)-binding residues include valine 80, aspartate 134, asparagine 162, tyrosine 239, lysine 243, valine 272, and serine 274. The active-site Proton donor is tyrosine 239. The Lowers pKa of active site Tyr role is filled by lysine 243. The tract at residues glutamine 359–histidine 389 is disordered.

The protein belongs to the short-chain dehydrogenases/reductases (SDR) family.

It is found in the endoplasmic reticulum membrane. It carries out the reaction a very-long-chain (3R)-3-hydroxyacyl-CoA + NADP(+) = a very-long-chain 3-oxoacyl-CoA + NADPH + H(+). It participates in lipid metabolism; fatty acid biosynthesis. Functionally, component of the microsomal membrane bound fatty acid elongation system, which produces the 26-carbon very long-chain fatty acids (VLCFA) from palmitate. Catalyzes the reduction of the 3-ketoacyl-CoA intermediate that is formed in each cycle of fatty acid elongation. VLCFAs serve as precursors for ceramide and sphingolipids. This Yarrowia lipolytica (strain CLIB 122 / E 150) (Yeast) protein is Very-long-chain 3-oxoacyl-CoA reductase.